A 369-amino-acid chain; its full sequence is Putative glutamate--cysteine ligase 2-1 (369 aa).

The protein belongs to the glutamate--cysteine ligase type 2 family. YbdK subfamily.

The catalysed reaction is L-cysteine + L-glutamate + ATP = gamma-L-glutamyl-L-cysteine + ADP + phosphate + H(+). Functionally, ATP-dependent carboxylate-amine ligase which exhibits weak glutamate--cysteine ligase activity. This is Putative glutamate--cysteine ligase 2-1 from Rhodococcus jostii (strain RHA1).